The primary structure comprises 387 residues: Protein FAM153B (387 aa).

Disordered stretches follow at residues 233–256 (SYNG…RGDL) and 327–374 (TITG…KKSR). Residues 336–345 (SASPSSAPAE) show a composition bias toward low complexity. The segment covering 347 to 359 (ATEKTKVEEEVKT) has biased composition (basic and acidic residues). Residues 360-374 (RKPKKKTRKPSKKSR) are compositionally biased toward basic residues.

The protein belongs to the FAM153 family.

The polypeptide is Protein FAM153B (FAM153B) (Homo sapiens (Human)).